The chain runs to 85 residues: U4-theraphotoxin-Hhn1g (85 aa).

The N-terminal stretch at methionine 1–alanine 22 is a signal peptide. The propeptide occupies glutamate 23–arginine 48. 3 cysteine pairs are disulfide-bonded: cysteine 52–cysteine 66, cysteine 56–cysteine 77, and cysteine 71–cysteine 82.

Belongs to the neurotoxin 12 (Hwtx-2) family. 02 (Hwtx-2) subfamily. In terms of tissue distribution, expressed by the venom gland.

It is found in the secreted. Its function is as follows. Postsynaptic neurotoxin. The chain is U4-theraphotoxin-Hhn1g from Cyriopagopus hainanus (Chinese bird spider).